The following is a 418-amino-acid chain: Phosphoglycerate kinase (418 aa).

Residues aspartate 18 to asparagine 20, arginine 34, histidine 57 to arginine 60, arginine 115, and arginine 171 contribute to the substrate site. ATP contacts are provided by residues lysine 224, glycine 315, glutamate 346, and glycine 375–serine 378.

It belongs to the phosphoglycerate kinase family. Monomer.

The protein localises to the cytoplasm. The catalysed reaction is (2R)-3-phosphoglycerate + ATP = (2R)-3-phospho-glyceroyl phosphate + ADP. The protein operates within carbohydrate degradation; glycolysis; pyruvate from D-glyceraldehyde 3-phosphate: step 2/5. This chain is Phosphoglycerate kinase, found in Porphyromonas gingivalis (strain ATCC BAA-308 / W83).